The primary structure comprises 166 residues: Urease accessory protein UreE (166 aa).

Belongs to the UreE family.

It localises to the cytoplasm. In terms of biological role, involved in urease metallocenter assembly. Binds nickel. Probably functions as a nickel donor during metallocenter assembly. In Azotobacter vinelandii (strain DJ / ATCC BAA-1303), this protein is Urease accessory protein UreE.